The primary structure comprises 559 residues: Regulatory protein PHO2 (559 aa).

4 disordered regions span residues 16 to 88 (ATDL…KGEA), 132 to 158 (LRKK…DYDR), 293 to 333 (INSN…AKDN), and 534 to 559 (PTDS…HRWI). Low complexity-rich tracts occupy residues 24 to 52 (HDQQ…IQTQ) and 63 to 74 (NDMSASSNASDS). The segment at residues 77–136 (QRPKRTRAKGEALDVLKRKFEINPTPSLVERKKISDLIGMPEKNVRIWFQNRRAKLRKKQ) is a DNA-binding region (homeobox). Over residues 141-151 (KDTIPSSQSRD) the composition is skewed to polar residues. Residues 293 to 307 (INSNNTSDKNNSNTN) show a composition bias toward low complexity. The segment covering 308-323 (NDDDNDDNSNEDNDNS) has biased composition (acidic residues). Basic and acidic residues predominate over residues 324 to 333 (SEDKRNAKDN). Position 542 is a phosphothreonine (threonine 542).

It is found in the nucleus. Regulator in phosphate metabolism and acts as a derepressor of another central regulator PHO5. Binds to the upstream activator sequence (UAS) of PHO5. It also binds to the TRP4, HIS4, and CYC1 promoters. The sequence is that of Regulatory protein PHO2 (PHO2) from Saccharomyces cerevisiae (strain ATCC 204508 / S288c) (Baker's yeast).